A 432-amino-acid chain; its full sequence is Probable N-acetylmuramoyl-L-alanine amidase AmiB (432 aa).

Positions 1 to 20 are cleaved as a signal peptide; sequence MKTKILFFLFFSTFSFSIFA. The 220-residue stretch at 25–244 folds into the MurNAc-LAA domain; that stretch reads IAIDPGHGGK…IAYMIYEGLV (220 aa). 2 LysM domains span residues 292–335 and 385–429; these read IRHI…SIKI and LYHK…KIKL.

It belongs to the N-acetylmuramoyl-L-alanine amidase 3 family.

The protein resides in the periplasm. The enzyme catalyses Hydrolyzes the link between N-acetylmuramoyl residues and L-amino acid residues in certain cell-wall glycopeptides.. Cell-wall hydrolase involved in septum cleavage during cell division. The sequence is that of Probable N-acetylmuramoyl-L-alanine amidase AmiB (amiB) from Haemophilus influenzae (strain ATCC 51907 / DSM 11121 / KW20 / Rd).